Here is a 1021-residue protein sequence, read N- to C-terminus: PDZ domain-containing protein 7 (1021 aa).

2 PDZ domains span residues 86 to 156 (AVRV…LTSS) and 210 to 279 (IVHL…EVLK). Positions 324–344 (SSSSVSSYASSAPCSSGSLPS) are enriched in low complexity. Disordered regions lie at residues 324–345 (SSSS…LPSD), 431–495 (ITRS…DSRS), and 724–814 (RRGA…HRPR). The segment covering 729–744 (APPPQPPPVAPRPPRP) has biased composition (pro residues). Residues 758 to 767 (QQNQSQTPAQ) are compositionally biased toward polar residues. Residues 772-794 (SRSRSRSRSHSRGQGKSPGRRRS) are compositionally biased toward basic residues. Positions 799 to 808 (PIATAATANG) are enriched in low complexity. The 73-residue stretch at 858–930 (TITLSKMKQS…QRAVDTIRRA (73 aa)) folds into the PDZ 3 domain. The tract at residues 992–1021 (QLQQSLSSALKVPQSIPKLSPILKDPHDPS) is disordered.

In terms of assembly, homodimerizes (via PDZ2 domain). Component of USH2 complex, composed of ADGRV1, PDZD7, USH2A and WHRN. Interacts (via PDZ domains) with WHRN; the interaction is direct. Interacts with USH1G. Interacts with ADGRV1 (via the cytoplasmic region). Interacts with USH2A (via the cytoplasmic region). Interacts with MYO7A (via MyTH4-FERM domains). In terms of tissue distribution, isoform 1 is expressed in developing and adult cochlea but not retina. Isoform 2 is expressed in developing and adult cochlea and retina. Isoform 3 is expressed in adult cochlea and retina. Isoform 4 is expressed in retina and developing cochlea but not adult cochlea. Isoform 5 is expressed in adult cochlea but not in developing cochlea or retina.

It localises to the cell projection. It is found in the cilium. The protein resides in the nucleus. Its subcellular location is the stereocilium. In terms of biological role, in cochlear developing hair cells, essential in organizing the USH2 complex at stereocilia ankle links. Blocks inhibition of adenylate cyclase activity mediated by ADGRV1. The polypeptide is PDZ domain-containing protein 7 (Mus musculus (Mouse)).